The primary structure comprises 298 residues: Short-chain dehydrogenase reductase 4 (298 aa).

50-74 (IITGGASGIGAEAVRLFTDHGAKVV) lines the NAD(+) pocket. Ser182 contacts substrate. Tyr195 serves as the catalytic Proton acceptor.

It belongs to the short-chain dehydrogenases/reductases (SDR) family.

In Arabidopsis thaliana (Mouse-ear cress), this protein is Short-chain dehydrogenase reductase 4 (SDR4).